The primary structure comprises 453 residues: Regulatory protein opaque-2 (453 aa).

Residues 145 to 243 (SSVVTSDQRS…SNRESARRSR (99 aa)) are disordered. The segment covering 146 to 175 (SVVTSDQRSQGSNNHTGGSSIRNNPVQNKL) has biased composition (polar residues). Over residues 207–216 (PSDEDMDGEV) the composition is skewed to acidic residues. Basic and acidic residues predominate over residues 224–240 (PTEERVRKKESNRESAR). One can recognise a bZIP domain in the interval 225–288 (TEERVRKKES…NDANVDNRVL (64 aa)). The tract at residues 228–251 (RVRKKESNRESARRSRYRKAAHLK) is basic motif. A leucine-zipper region spans residues 253–274 (LEDQVAQLKAENSCLLRRIAAL).

This sequence belongs to the bZIP family. Interacts with the Dof zinc finger protein PBF. In terms of tissue distribution, seed endosperm.

It is found in the nucleus. Functionally, involved in the regulation of the endosperm-specific production of albumin b-32 and other zein proteins. It is a trans-acting transcriptional activator that binds to the consensus sequence 5'-GATGAYRTGR-3'. In Zea mays (Maize), this protein is Regulatory protein opaque-2 (O2).